The primary structure comprises 422 residues: MEIPSTSSEMTYFSVKCAICYKAGHGQHFGVETCRACAAFFRRTVVLNRKYKCTRKSGKCKIGSDETKDVMCKFCRFKKCIDLGMTTENVRTDQVINLNVEPSTSQSLVRLEMTSLQPETDDSNRVQYQIIHPRTRGPAILIDVNAIIKRSKTILETHFFPDDDVIVELNPLEKMTFCLRKLRSKQSWNPNFFTKINFLDLFEFWESQMEDTATWLMYSGEFRKLPNHEKIAIFKIVWAVWRRLERYTMTAQVFGQKCYDEQILLHSHQDAARFTDYDVDYSYITDQGFEKINGLFGGKMIQYFDIIVKPYLELELSDTEIAYILCQIVWNYAGRRLQGQTQAAGERFLEVISNNLHKYYEDKSGNRKRAEDKQNYVARLAKMMQIVNQMLNAQLKMENTMDVAMLFNTFNIVFTEPEFFRV.

The nuclear receptor DNA-binding region spans 14-92 (SVKCAICYKA…LGMTTENVRT (79 aa)). 2 consecutive NR C4-type zinc fingers follow at residues 17 to 37 (CAIC…CRAC) and 53 to 80 (CTRK…FKKC). Residues 161 to 422 (PDDDVIVELN…VFTEPEFFRV (262 aa)) enclose the NR LBD domain.

The protein belongs to the nuclear hormone receptor family.

It localises to the nucleus. In terms of biological role, orphan nuclear receptor. This Caenorhabditis elegans protein is Nuclear hormone receptor family member nhr-54 (nhr-54).